We begin with the raw amino-acid sequence, 494 residues long: Homeotic protein bicoid (494 aa).

3 disordered regions span residues 1-49 (MAQP…PPQF), 149-210 (RRRH…TAHM), and 263-293 (QQVHNHQQQLHHQGNHVPHQMQQQQQQAQQQ). A compositionally biased stretch (basic residues) spans 14-40 (PLPHTHTHPHPHSHPHPHSHPHPHHQH). Residues 97–156 (PRRTRTTFTSSQIAELEQHFLQGRYLTAPRLADLSAKLALGTAQVKIWFKNRRRRHKIQS) constitute a DNA-binding region (homeobox). Residues 154–163 (IQSDQHKDQS) are compositionally biased toward basic and acidic residues. Positions 433–440 (RGAAFAKF) are RNA-binding.

The protein belongs to the paired homeobox family. Bicoid subfamily. In terms of assembly, interacts with Bin1; in vitro and yeast cells. Interacts with bin3. Maternal expression is an anterior cap concentrated in the cortical cytoplasm. Its transcript is produced maternally and sequestered near the anterior pole of the mature oocyte. After egg deposition, it is translated into protein, which diffuses toward the posterior, forming a long-range anterior gradient.

It is found in the nucleus. Functionally, segment polarity transcription factor that provides positional cues for the development of head and thoracic segments. Forms a protein concentration gradient that patterns the anterior-posterior axis during embryogenesis and promotes the expression of anterior gap genes, such as hunchback (hb), ocelliless (oc), and buttonhead (btd). Binds to regulatory DNA sequences containing a 5'-TAATCC-3' sequence motif. Also binds RNA. Interacts with Bin1 to repress transcription of bicoid target genes in the anterior tip of the embryo; a process known as retraction. The chain is Homeotic protein bicoid from Drosophila melanogaster (Fruit fly).